A 140-amino-acid chain; its full sequence is ATP synthase epsilon chain (140 aa).

It belongs to the ATPase epsilon chain family. As to quaternary structure, F-type ATPases have 2 components, CF(1) - the catalytic core - and CF(0) - the membrane proton channel. CF(1) has five subunits: alpha(3), beta(3), gamma(1), delta(1), epsilon(1). CF(0) has three main subunits: a, b and c.

The protein resides in the cell inner membrane. Produces ATP from ADP in the presence of a proton gradient across the membrane. The protein is ATP synthase epsilon chain of Sodalis glossinidius (strain morsitans).